A 162-amino-acid polypeptide reads, in one-letter code: Probable ergosterol biosynthetic protein 28 homolog (162 aa).

A run of 4 helical transmembrane segments spans residues 7–25, 40–60, 69–89, and 96–116; these read AWMSIVVVQAMGSVWMCYA, LSRAHALPLALLCILRIVLIF, IAHILLSILTAIHTMTEVFFY, and IVTVTEVTLNSFSVVVMLTFL.

It belongs to the ERG28 family. In terms of tissue distribution, expressed in tissues including muscles, intestine and neurons.

The protein resides in the endoplasmic reticulum membrane. It is found in the cell projection. It localises to the dendrite. Functionally, promotes the translocation of slo-1 potassium ion channels from the endoplasmic reticulum to its final destination at the plasma membrane, probably by shielding from premature proteasomal degradation in the endoplasmic reticulum. Maintains the levels of slo-1 potassium ion channel at the presynaptic neurons. The protein is Probable ergosterol biosynthetic protein 28 homolog of Caenorhabditis elegans.